The sequence spans 629 residues: MTTKLKNASNLSESAQVDQQSVQPFTRSQKVYVQGSRPDIRVPMREITLDVTPTDFGGEINAPVTVYDTSGPYTDPNVVIDVRKGLGDVRSAWIEDRGDTERLAGLSSNFGQQRLADPELTKLRFAHVNNPRRAKAGANVSQMHYARKGIITAEMEYVAIRENMKLQEARAAGLLKQQHAGHSFGASIPKEITPEFVREEIARGRAIIPANINHVELEPMIIGRNFLVKINGNIGNSALGSSIEEEVAKLTWGIRWGSDTVMDLSTGKHIHETREWIIRNSPVPIGTVPIYQALEKVNGVAEDLTWELFRDTLIEQAEQGVDYFTIHAGVLLRYVPLTAKRVTGIVSRGGSIMAKWCLAHHKENFLYTHFDEICEIMKAYDVSFSLGDGLRPGSIADANDEAQFGELETLGELTKIAWKHDVQCMIEGPGHVPMQLIKENMDKQLECCDEAPFYTLGPLTTDIAPGYDHITSGIGAAMIGWFGCAMLCYVTPKEHLGLPNKDDVKTGIITYKIAAHAADLAKGHPGAQIRDNALSKARFEFRWEDQFNLGLDPDTARSYHDETLPKDSAKVAHFCSMCGPKFCSMKITQEVREYAANQRIEAVDVDVAKGLAEQAERFKQEGSQLYKKV.

The interval 1–30 is disordered; it reads MTTKLKNASNLSESAQVDQQSVQPFTRSQK. Substrate contacts are provided by residues asparagine 233, methionine 262, tyrosine 291, histidine 327, 347–349, 388–391, and glutamate 427; these read SRG and DGLR. Residue histidine 431 participates in Zn(2+) binding. Residue tyrosine 454 coordinates substrate. Histidine 495 contributes to the Zn(2+) binding site. 3 residues coordinate [4Fe-4S] cluster: cysteine 575, cysteine 578, and cysteine 583.

It belongs to the ThiC family. Homodimer. The cofactor is [4Fe-4S] cluster.

It catalyses the reaction 5-amino-1-(5-phospho-beta-D-ribosyl)imidazole + S-adenosyl-L-methionine = 4-amino-2-methyl-5-(phosphooxymethyl)pyrimidine + CO + 5'-deoxyadenosine + formate + L-methionine + 3 H(+). Its pathway is cofactor biosynthesis; thiamine diphosphate biosynthesis. In terms of biological role, catalyzes the synthesis of the hydroxymethylpyrimidine phosphate (HMP-P) moiety of thiamine from aminoimidazole ribotide (AIR) in a radical S-adenosyl-L-methionine (SAM)-dependent reaction. The protein is Phosphomethylpyrimidine synthase of Pseudomonas fluorescens (strain ATCC BAA-477 / NRRL B-23932 / Pf-5).